The following is a 262-amino-acid chain: Transmembrane and immunoglobulin domain-containing protein 1 (262 aa).

The signal sequence occupies residues 1–29 (MAWKSSVIMQMGRFLLLVILFLPREMTSS). The 85-residue stretch at 30–114 (VLTVNGKTEN…LGRDQSVSVS (85 aa)) folds into the Ig-like C2-type 1 domain. Residues 30-220 (VLTVNGKTEN…IVKDKTVGVP (191 aa)) are Extracellular-facing. A disulfide bond links Cys-54 and Cys-103. N-linked (GlcNAc...) asparagine glycosylation is found at Asn-58, Asn-83, Asn-118, Asn-158, and Asn-190. The Ig-like C2-type 2 domain maps to 122–207 (PPLLSGNDFQ…KSSLKTESLD (86 aa)). An intrachain disulfide couples Cys-143 to Cys-195. The chain crosses the membrane as a helical span at residues 221-241 (IEPIIAACVVIFLTLCFGLIA). Topologically, residues 242 to 262 (RRKKIMKLCMKDKDPHSETAL) are cytoplasmic.

In terms of assembly, homodimer. N-glycosylated.

It is found in the cell membrane. Its subcellular location is the cytoplasm. Functionally, may control cell-cell adhesion, cell migration and proliferation, cell morphology, and protects renal epithelial cells from oxidative cell injury to promote cell survival. This Homo sapiens (Human) protein is Transmembrane and immunoglobulin domain-containing protein 1.